The following is an 861-amino-acid chain: APC membrane recruitment protein 3 (861 aa).

Disordered stretches follow at residues 1-77, 179-206, 261-289, 351-415, 514-558, 576-644, 716-742, and 786-822; these read MELK…PKGG, AEGK…PPGE, PSLE…GPLQ, PLCP…FPRD, RGPT…GGAT, GLLA…SQKE, MLEQ…STQD, and AHGS…SQQE. Over residues 362 to 384 the composition is skewed to polar residues; it reads SKASSIDTGTPKSEQPESVSTSD. The segment covering 518–530 has biased composition (pro residues); sequence PRAPPTPGQPAAP. Residues 584–595 show a composition bias toward low complexity; that stretch reads ALGGATQGTGTL. A compositionally biased stretch (basic and acidic residues) spans 598-609; sequence DASREEETRGHS. Polar residues-rich tracts occupy residues 615–629 and 719–730; these read SMES…TSGK and QKQSSSSPSMTT.

This sequence belongs to the Amer family.

The protein resides in the cell membrane. In terms of biological role, regulator of the canonical Wnt signaling pathway. Acts by specifically binding phosphatidylinositol 4,5-bisphosphate (PtdIns(4,5)P2), translocating to the cell membrane. The polypeptide is APC membrane recruitment protein 3 (AMER3) (Homo sapiens (Human)).